Consider the following 62-residue polypeptide: Photosystem II reaction center protein Z (62 aa).

The next 2 membrane-spanning stretches (helical) occupy residues 8–28 (AVFA…VVFA) and 41–61 (FSGT…NSLI).

The protein belongs to the PsbZ family. PSII is composed of 1 copy each of membrane proteins PsbA, PsbB, PsbC, PsbD, PsbE, PsbF, PsbH, PsbI, PsbJ, PsbK, PsbL, PsbM, PsbT, PsbY, PsbZ, Psb30/Ycf12, at least 3 peripheral proteins of the oxygen-evolving complex and a large number of cofactors. It forms dimeric complexes.

Its subcellular location is the plastid. The protein localises to the chloroplast thylakoid membrane. Its function is as follows. May control the interaction of photosystem II (PSII) cores with the light-harvesting antenna, regulates electron flow through the 2 photosystem reaction centers. PSII is a light-driven water plastoquinone oxidoreductase, using light energy to abstract electrons from H(2)O, generating a proton gradient subsequently used for ATP formation. The chain is Photosystem II reaction center protein Z from Citrus sinensis (Sweet orange).